The primary structure comprises 354 residues: Magnesium-protoporphyrin IX monomethyl ester [oxidative] cyclase 2 (354 aa).

It belongs to the AcsF family. It depends on Fe cation as a cofactor.

The catalysed reaction is Mg-protoporphyrin IX 13-monomethyl ester + 3 NADPH + 3 O2 + 2 H(+) = 3,8-divinyl protochlorophyllide a + 3 NADP(+) + 5 H2O. It participates in porphyrin-containing compound metabolism; chlorophyll biosynthesis (light-independent). Functionally, catalyzes the formation of the isocyclic ring in chlorophyll biosynthesis. Mediates the cyclase reaction, which results in the formation of divinylprotochlorophyllide (Pchlide) characteristic of all chlorophylls from magnesium-protoporphyrin IX 13-monomethyl ester (MgPMME). This chain is Magnesium-protoporphyrin IX monomethyl ester [oxidative] cyclase 2, found in Thermosynechococcus vestitus (strain NIES-2133 / IAM M-273 / BP-1).